The following is a 718-amino-acid chain: DNA topoisomerase 1 (718 aa).

In terms of domain architecture, Toprim spans 9 to 151; that stretch reads HEVIICEKPK…KFSTLTREEI (143 aa). 2 residues coordinate Mg(2+): Glu15 and Asp113. The region spanning 162 to 571 is the Topo IA-type catalytic domain; it reads DYGQVDSGAA…EAITEVRSIL (410 aa). The tract at residues 202-207 is interaction with DNA; it reads SAGRVQ. Tyr320 acts as the O-(5'-phospho-DNA)-tyrosine intermediate in catalysis. Basic and acidic residues predominate over residues 361-371; that stretch reads HEGKKEDDAHP. Residues 361-380 form a disordered region; it reads HEGKKEDDAHPAIHPTGLLP. 2 C4-type zinc fingers span residues 598–626 and 680–706; these read CPAC…YPDC and CPEC…FPKC.

This sequence belongs to the type IA topoisomerase family. As to quaternary structure, monomer. Mg(2+) serves as cofactor.

It catalyses the reaction ATP-independent breakage of single-stranded DNA, followed by passage and rejoining.. Functionally, releases the supercoiling and torsional tension of DNA, which is introduced during the DNA replication and transcription, by transiently cleaving and rejoining one strand of the DNA duplex. Introduces a single-strand break via transesterification at a target site in duplex DNA. The scissile phosphodiester is attacked by the catalytic tyrosine of the enzyme, resulting in the formation of a DNA-(5'-phosphotyrosyl)-enzyme intermediate and the expulsion of a 3'-OH DNA strand. The free DNA strand then undergoes passage around the unbroken strand, thus removing DNA supercoils. Finally, in the religation step, the DNA 3'-OH attacks the covalent intermediate to expel the active-site tyrosine and restore the DNA phosphodiester backbone. The polypeptide is DNA topoisomerase 1 (Methanothermobacter thermautotrophicus (strain ATCC 29096 / DSM 1053 / JCM 10044 / NBRC 100330 / Delta H) (Methanobacterium thermoautotrophicum)).